The chain runs to 258 residues: Ribosomal RNA small subunit methyltransferase A (258 aa).

Residues N12, L14, G38, E59, D83, and N100 each coordinate S-adenosyl-L-methionine.

The protein belongs to the class I-like SAM-binding methyltransferase superfamily. rRNA adenine N(6)-methyltransferase family. RsmA subfamily.

The protein localises to the cytoplasm. The catalysed reaction is adenosine(1518)/adenosine(1519) in 16S rRNA + 4 S-adenosyl-L-methionine = N(6)-dimethyladenosine(1518)/N(6)-dimethyladenosine(1519) in 16S rRNA + 4 S-adenosyl-L-homocysteine + 4 H(+). Its function is as follows. Specifically dimethylates two adjacent adenosines (A1518 and A1519) in the loop of a conserved hairpin near the 3'-end of 16S rRNA in the 30S particle. May play a critical role in biogenesis of 30S subunits. In Metamycoplasma arthritidis (strain 158L3-1) (Mycoplasma arthritidis), this protein is Ribosomal RNA small subunit methyltransferase A.